A 226-amino-acid chain; its full sequence is Gap junction beta-2 protein (226 aa).

The stretch at 2 to 13 is an intramembrane region; sequence DWGALQTILGGV. Over 14 to 20 the chain is Cytoplasmic; it reads NKYSTSI. A helical transmembrane segment spans residues 21-40; sequence GKIWLTVLFIFRIMILVVAA. Residues 41-73 are Extracellular-facing; sequence KEVWGDEQADFVCNTLQPGCKNVCYDHYFPISH. Ca(2+)-binding residues include Glu42, Gly45, and Glu47. 3 disulfide bridges follow: Cys53–Cys180, Cys60–Cys174, and Cys64–Cys169. Residues 74–94 form a helical membrane-spanning segment; that stretch reads IRLWALQLIFVSTPALLVAMH. Residues 95–135 are Cytoplasmic-facing; sequence VAYRRHEKKRKFIKGEIKNEFKDIEEIKTQKVRIEGSLWWT. Residues 136-156 traverse the membrane as a helical segment; the sequence is YTSSIFFRVVFEAAFMYVFYV. The Extracellular segment spans residues 157-189; it reads MYDGFSMQRLVKCNAWPCPNTVDCFVSRPTEKT. The helical transmembrane segment at 190-210 threads the bilayer; the sequence is VFTVFMIAVSGICILLNVTEL. At 211–226 the chain is on the cytoplasmic side; it reads CYLLIRYCSGKSKKPV.

Belongs to the connexin family. Beta-type (group I) subfamily. In terms of assembly, a hemichannel or connexon is composed of a hexamer of connexins. A functional gap junction is formed by the apposition of two hemichannels. Forms heteromeric channels with GJB4. Interacts with CNST.

It is found in the cell membrane. Its subcellular location is the cell junction. The protein resides in the gap junction. In terms of biological role, structural component of gap junctions. Gap junctions are dodecameric channels that connect the cytoplasm of adjoining cells. They are formed by the docking of two hexameric hemichannels, one from each cell membrane. Small molecules and ions diffuse from one cell to a neighboring cell via the central pore. This chain is Gap junction beta-2 protein (GJB2), found in Macaca mulatta (Rhesus macaque).